The chain runs to 205 residues: Holliday junction branch migration complex subunit RuvA (205 aa).

Residues 1–64 (MIGRLRGTLA…EDAHLLYGFH (64 aa)) are domain I. A domain II region spans residues 65 to 143 (EKRERELFRE…AWETSPAMFT (79 aa)). The interval 144 to 153 (LVSDGPVPVS) is flexible linker. Residues 154–205 (GASTAEADAVSALVSLGYKPQEASKAVSAIKDKAGLSSEELIRRSLKGMITK) form a domain III region.

This sequence belongs to the RuvA family. As to quaternary structure, homotetramer. Forms an RuvA(8)-RuvB(12)-Holliday junction (HJ) complex. HJ DNA is sandwiched between 2 RuvA tetramers; dsDNA enters through RuvA and exits via RuvB. An RuvB hexamer assembles on each DNA strand where it exits the tetramer. Each RuvB hexamer is contacted by two RuvA subunits (via domain III) on 2 adjacent RuvB subunits; this complex drives branch migration. In the full resolvosome a probable DNA-RuvA(4)-RuvB(12)-RuvC(2) complex forms which resolves the HJ.

It localises to the cytoplasm. In terms of biological role, the RuvA-RuvB-RuvC complex processes Holliday junction (HJ) DNA during genetic recombination and DNA repair, while the RuvA-RuvB complex plays an important role in the rescue of blocked DNA replication forks via replication fork reversal (RFR). RuvA specifically binds to HJ cruciform DNA, conferring on it an open structure. The RuvB hexamer acts as an ATP-dependent pump, pulling dsDNA into and through the RuvAB complex. HJ branch migration allows RuvC to scan DNA until it finds its consensus sequence, where it cleaves and resolves the cruciform DNA. In Pseudomonas putida (strain W619), this protein is Holliday junction branch migration complex subunit RuvA.